The sequence spans 252 residues: Ubiquinone biosynthesis protein COQ4 homolog 1, mitochondrial (252 aa).

Residues histidine 130, aspartate 131, histidine 134, and glutamate 146 each coordinate Zn(2+).

Belongs to the COQ4 family. Component of a multi-subunit COQ enzyme complex. Zn(2+) serves as cofactor.

The protein localises to the mitochondrion inner membrane. The enzyme catalyses a 4-hydroxy-3-methoxy-5-(all-trans-polyprenyl)benzoate + H(+) = a 2-methoxy-6-(all-trans-polyprenyl)phenol + CO2. It functions in the pathway cofactor biosynthesis; ubiquinone biosynthesis. In terms of biological role, lyase that catalyzes the C1-decarboxylation of 4-hydroxy-3-methoxy-5-(all-trans-polyprenyl)benzoic acid into 2-methoxy-6-(all-trans-polyprenyl)phenol during ubiquinone biosynthesis. This is Ubiquinone biosynthesis protein COQ4 homolog 1, mitochondrial from Trypanosoma cruzi (strain CL Brener).